The sequence spans 85 residues: Putative membrane protein insertion efficiency factor (85 aa).

This sequence belongs to the UPF0161 family.

It is found in the cell membrane. In terms of biological role, could be involved in insertion of integral membrane proteins into the membrane. The protein is Putative membrane protein insertion efficiency factor of Buchnera aphidicola subsp. Schizaphis graminum (strain Sg).